The following is a 668-amino-acid chain: DNA ligase (668 aa).

NAD(+)-binding positions include 37-41 (DAVYD), 86-87 (SM), and glutamate 116. The active-site N6-AMP-lysine intermediate is the lysine 118. NAD(+) contacts are provided by arginine 139, glutamate 173, lysine 288, and lysine 312. Positions 406, 409, 424, and 429 each coordinate Zn(2+). Positions 590-668 (APDNFFKEKT…EQEAIAKIEK (79 aa)) constitute a BRCT domain.

Belongs to the NAD-dependent DNA ligase family. LigA subfamily. Mg(2+) serves as cofactor. Requires Mn(2+) as cofactor.

It catalyses the reaction NAD(+) + (deoxyribonucleotide)n-3'-hydroxyl + 5'-phospho-(deoxyribonucleotide)m = (deoxyribonucleotide)n+m + AMP + beta-nicotinamide D-nucleotide.. In terms of biological role, DNA ligase that catalyzes the formation of phosphodiester linkages between 5'-phosphoryl and 3'-hydroxyl groups in double-stranded DNA using NAD as a coenzyme and as the energy source for the reaction. It is essential for DNA replication and repair of damaged DNA. The chain is DNA ligase from Lactobacillus johnsonii (strain CNCM I-12250 / La1 / NCC 533).